The chain runs to 907 residues: Protein translocase subunit SecA (907 aa).

ATP-binding positions include Gln-87, 105 to 109 (GEGKT), and Asp-513. The segment covering 841-853 (EAQRRAQAEEAAR) has biased composition (basic and acidic residues). The segment at 841–907 (EAQRRAQAEE…KYKQCHGQIN (67 aa)) is disordered. The span at 854–865 (RAQAQHASAQSQ) shows a compositional bias: low complexity. The span at 872 to 887 (EGHHQPVVRDERKVGR) shows a compositional bias: basic and acidic residues. Zn(2+) contacts are provided by Cys-891, Cys-893, Cys-902, and His-903.

It belongs to the SecA family. Monomer and homodimer. Part of the essential Sec protein translocation apparatus which comprises SecA, SecYEG and auxiliary proteins SecDF-YajC and YidC. The cofactor is Zn(2+).

It localises to the cell inner membrane. The protein localises to the cytoplasm. It catalyses the reaction ATP + H2O + cellular proteinSide 1 = ADP + phosphate + cellular proteinSide 2.. Functionally, part of the Sec protein translocase complex. Interacts with the SecYEG preprotein conducting channel. Has a central role in coupling the hydrolysis of ATP to the transfer of proteins into and across the cell membrane, serving both as a receptor for the preprotein-SecB complex and as an ATP-driven molecular motor driving the stepwise translocation of polypeptide chains across the membrane. This is Protein translocase subunit SecA from Vibrio vulnificus (strain CMCP6).